The following is a 239-amino-acid chain: Cysteine-rich venom protein ophanin (239 aa).

The signal sequence occupies residues M1–G18. The region spanning V37–Y165 is the SCP domain. 8 disulfides stabilise this stretch: C74/C152, C91/C166, C147/C163, C185/C192, C188/C197, C201/C234, C210/C228, and C219/C232. The region spanning C201–C234 is the ShKT domain.

As to expression, expressed by the venom gland.

Its subcellular location is the secreted. Weakly blocks contraction of smooth muscle elicited by high potassium-induced depolarization, but does not block caffeine-stimulated contraction. May target voltage-gated calcium channels on smooth muscle. This Ophiophagus hannah (King cobra) protein is Cysteine-rich venom protein ophanin.